Consider the following 116-residue polypeptide: Methionine-R-sulfoxide reductase B1 (116 aa).

The region spanning 1–106 is the MsrB domain; the sequence is MSFCSFFGGE…FSSSLKFVPK (106 aa). Residues cysteine 23, cysteine 26, cysteine 71, and cysteine 74 each coordinate Zn(2+). The active-site Nucleophile is the selenocysteine 95. Selenocysteine 95 is a non-standard amino acid (selenocysteine).

The protein belongs to the MsrB Met sulfoxide reductase family. Zn(2+) is required as a cofactor. Post-translationally, truncated MSRB1/SEPX1 proteins produced by failed UGA/Sec decoding are ubiquitinated by the CRL2(FEM1C) E3 ubiquitin-protein ligase complex.

The protein localises to the cytoplasm. The protein resides in the nucleus. Its subcellular location is the cytoskeleton. It carries out the reaction L-methionyl-[protein] + [thioredoxin]-disulfide + H2O = L-methionyl-(R)-S-oxide-[protein] + [thioredoxin]-dithiol. The catalysed reaction is [thioredoxin]-disulfide + L-methionine + H2O = L-methionine (R)-S-oxide + [thioredoxin]-dithiol. Functionally, methionine-sulfoxide reductase that specifically reduces methionine (R)-sulfoxide back to methionine. While in many cases, methionine oxidation is the result of random oxidation following oxidative stress, methionine oxidation is also a post-translational modification that takes place on specific residue. Acts as a regulator of actin assembly by reducing methionine (R)-sulfoxide mediated by MICALs (MICAL1, MICAL2 or MICAL3) on actin, thereby promoting filament repolymerization. Plays a role in innate immunity by reducing oxidized actin, leading to actin repolymerization in macrophages. This Pongo abelii (Sumatran orangutan) protein is Methionine-R-sulfoxide reductase B1 (MSRB1).